Reading from the N-terminus, the 180-residue chain is NADH-quinone oxidoreductase subunit I (180 aa).

4Fe-4S ferredoxin-type domains lie at 48–80 (IVLT…LQKS) and 90–119 (EFFR…LTPD). Positions 60, 63, 66, 70, 99, 102, 105, and 109 each coordinate [4Fe-4S] cluster. Residues 161–174 (KPKGDAENEAKPID) are compositionally biased toward basic and acidic residues. Residues 161–180 (KPKGDAENEAKPIDVKSLLP) are disordered.

This sequence belongs to the complex I 23 kDa subunit family. In terms of assembly, NDH-1 is composed of 14 different subunits. Subunits NuoA, H, J, K, L, M, N constitute the membrane sector of the complex. It depends on [4Fe-4S] cluster as a cofactor.

Its subcellular location is the cell inner membrane. It catalyses the reaction a quinone + NADH + 5 H(+)(in) = a quinol + NAD(+) + 4 H(+)(out). Functionally, NDH-1 shuttles electrons from NADH, via FMN and iron-sulfur (Fe-S) centers, to quinones in the respiratory chain. The immediate electron acceptor for the enzyme in this species is believed to be ubiquinone. Couples the redox reaction to proton translocation (for every two electrons transferred, four hydrogen ions are translocated across the cytoplasmic membrane), and thus conserves the redox energy in a proton gradient. The polypeptide is NADH-quinone oxidoreductase subunit I (Aeromonas hydrophila subsp. hydrophila (strain ATCC 7966 / DSM 30187 / BCRC 13018 / CCUG 14551 / JCM 1027 / KCTC 2358 / NCIMB 9240 / NCTC 8049)).